A 149-amino-acid chain; its full sequence is Large ribosomal subunit protein uL13 (149 aa).

Belongs to the universal ribosomal protein uL13 family. As to quaternary structure, part of the 50S ribosomal subunit.

In terms of biological role, this protein is one of the early assembly proteins of the 50S ribosomal subunit, although it is not seen to bind rRNA by itself. It is important during the early stages of 50S assembly. This Chlorobium phaeovibrioides (strain DSM 265 / 1930) (Prosthecochloris vibrioformis (strain DSM 265)) protein is Large ribosomal subunit protein uL13.